The following is a 450-amino-acid chain: MKTVTEFQNKNILVLGIAKSGYAAATLLQKLGANVIVNDGKPLADNVLAAELQAKGMDVVCGGHPLELLERNISLVVKNPGIPYSNPILVAAKEKEIPIVTEVELAYRISKAPFVGITGSNGKTTTTMLTFEMLKEGQKHPVIAGNIGTVACEVAQDAKENEVVVTELSSFQLMGVESFQPKIAAFLNLFEAHLDYHGTKKEYGLAKANVFKNQTENDYSVINADDADVMELSADTKGQKILFSTTKEIEDGACIKDNALYFKGEKVVEVSDIVLPGQHNLENILAAMSIAKLLGTSNEAITVVLKRFTGVKHRLEYVTTINNRKFYNDSKATNMLATEKALSAFTQPIVLLAGGLDRGNEFDDLIPYFKNVKAIVTFGQTAPKLVRAAEKAGLDIIESVDTLDEAVVKAYAHSKEDDVVLLSPACASWDQFKTFEERGDIFIQAVHKLI.

An ATP-binding site is contributed by 119 to 125 (GSNGKTT).

This sequence belongs to the MurCDEF family.

It is found in the cytoplasm. The enzyme catalyses UDP-N-acetyl-alpha-D-muramoyl-L-alanine + D-glutamate + ATP = UDP-N-acetyl-alpha-D-muramoyl-L-alanyl-D-glutamate + ADP + phosphate + H(+). Its pathway is cell wall biogenesis; peptidoglycan biosynthesis. Cell wall formation. Catalyzes the addition of glutamate to the nucleotide precursor UDP-N-acetylmuramoyl-L-alanine (UMA). The sequence is that of UDP-N-acetylmuramoylalanine--D-glutamate ligase from Bacillus cereus (strain G9842).